We begin with the raw amino-acid sequence, 493 residues long: Transcription termination factor MTERF5, chloroplastic (493 aa).

Residues 1 to 43 (MQSLSQLGPSEIFLVARREKPSTRAQLWFTGRLSFRQETNGIR) constitute a chloroplast transit peptide.

It belongs to the mTERF family. As to quaternary structure, interacts with pTAC6. Expressed in roots, rosette leaves, cauline leaves, stems, flower buds and open flowers.

The protein localises to the plastid. The protein resides in the chloroplast. Its function is as follows. Transcription termination factor required for processing and steady-state levels of plastid transcripts. Involved also in chloroplast transcriptional pausing, a general feature of chloroplast genes. Specifically and positively regulates the transcription of chloroplast psbEFLJ encoding for photosystem II (PSII) core subunits psbE, psbF, psbL and psbJ; causes the plastid-encoded RNA polymerase (PEP) complex to pause at psbEFLJ by binding to the +30 to +51 region of double-stranded DNA, and recruits additional pTAC6 to the transcriptionally paused region of psbEFLJ. May play a role in response to abiotic stresses. The protein is Transcription termination factor MTERF5, chloroplastic of Arabidopsis thaliana (Mouse-ear cress).